The following is a 190-amino-acid chain: Small ribosomal subunit protein uS5 (190 aa).

Residues 22-85 (FVDKLVHINR…DSAKRNLTRV (64 aa)) form the S5 DRBM domain.

Belongs to the universal ribosomal protein uS5 family. In terms of assembly, part of the 30S ribosomal subunit. Contacts proteins S4 and S8.

Functionally, with S4 and S12 plays an important role in translational accuracy. Located at the back of the 30S subunit body where it stabilizes the conformation of the head with respect to the body. The sequence is that of Small ribosomal subunit protein uS5 from Bradyrhizobium sp. (strain BTAi1 / ATCC BAA-1182).